The sequence spans 237 residues: MRLGKPKGGISRSASQGKTYESKRKTARQRQKWGVAIRFDSGLSRRRRNVDEKPYKCTKCSKSFSQSSTLFQHKKIHTGKKSHKCADCGKSFFQSSNLIQHRRIHTGEKPYKCDECGERFKQSSNLIQHQRIHTGEKPYCCDECGRCFSQSSHLIQHQRTHTGEKPYQCEECDKCFSQSSHLRQHMKVHKEKKSHKRGKNARAKTHPVSWKRGKGRKAVAGLRQVKGAASGLFKKKK.

Residues 1-33 (MRLGKPKGGISRSASQGKTYESKRKTARQRQKW) form a disordered region. N6-acetyllysine is present on residues K18 and K23. 5 C2H2-type zinc fingers span residues 55–82 (YKCTKCSKSFSQSSTLFQHKKIHTGKKS), 83–110 (HKCADCGKSFFQSSNLIQHRRIHTGEKP), 111–138 (YKCDECGERFKQSSNLIQHQRIHTGEKP), 139–166 (YCCDECGRCFSQSSHLIQHQRTHTGEKP), and 167–194 (YQCEECDKCFSQSSHLRQHMKVHKEKKS). Residues 188 to 217 (VHKEKKSHKRGKNARAKTHPVSWKRGKGRK) show a composition bias toward basic residues. Positions 188 to 218 (VHKEKKSHKRGKNARAKTHPVSWKRGKGRKA) are disordered.

Belongs to the krueppel C2H2-type zinc-finger protein family. In terms of tissue distribution, highly expressed in the ameloblast layer of mandibular incisors, moderately expressed in submandibular gland, calvaria, kidney and lung, and expressed at low levels in brain and thymus.

It is found in the nucleus. In terms of biological role, binds DNA through the consensus sequence 5'-CAATG-3'. May be involved in transcriptional regulation and may play a role in tooth formation. This Rattus norvegicus (Rat) protein is Zinc finger protein 22 (Znf22).